Here is a 630-residue protein sequence, read N- to C-terminus: UvrABC system protein C (630 aa).

The GIY-YIG domain maps to 18 to 97; the sequence is TQSGVYLMKN…IKKHRPKYNI (80 aa). In terms of domain architecture, UVR spans 207–242; the sequence is KKVIKSMTEKMMGAADEEKFEVAARLRDSIEAIKAI.

It belongs to the UvrC family. As to quaternary structure, interacts with UvrB in an incision complex.

It is found in the cytoplasm. Functionally, the UvrABC repair system catalyzes the recognition and processing of DNA lesions. UvrC both incises the 5' and 3' sides of the lesion. The N-terminal half is responsible for the 3' incision and the C-terminal half is responsible for the 5' incision. This chain is UvrABC system protein C, found in Bdellovibrio bacteriovorus (strain ATCC 15356 / DSM 50701 / NCIMB 9529 / HD100).